Consider the following 310-residue polypeptide: Probable plastid-lipid-associated protein 2, chloroplastic (310 aa).

A chloroplast-targeting transit peptide spans M1–R59. Position 61 is a phosphothreonine (T61). Positions E65–L94 form a coiled coil.

It belongs to the PAP/fibrillin family.

It is found in the plastid. The protein localises to the chloroplast. It localises to the plastoglobule. Probably involved in light/cold stress-related jasmonate (JA) biosynthesis. The protein is Probable plastid-lipid-associated protein 2, chloroplastic (PAP2) of Arabidopsis thaliana (Mouse-ear cress).